Here is a 328-residue protein sequence, read N- to C-terminus: N-acetyl-gamma-glutamyl-phosphate reductase (328 aa).

Residue C143 is part of the active site.

This sequence belongs to the NAGSA dehydrogenase family. Type 1 subfamily.

Its subcellular location is the cytoplasm. It carries out the reaction N-acetyl-L-glutamate 5-semialdehyde + phosphate + NADP(+) = N-acetyl-L-glutamyl 5-phosphate + NADPH + H(+). It functions in the pathway amino-acid biosynthesis; L-arginine biosynthesis; N(2)-acetyl-L-ornithine from L-glutamate: step 3/4. In terms of biological role, catalyzes the NADPH-dependent reduction of N-acetyl-5-glutamyl phosphate to yield N-acetyl-L-glutamate 5-semialdehyde. The polypeptide is N-acetyl-gamma-glutamyl-phosphate reductase (Methanosphaerula palustris (strain ATCC BAA-1556 / DSM 19958 / E1-9c)).